A 462-amino-acid polypeptide reads, in one-letter code: Serine--tRNA ligase, cytoplasmic (462 aa).

246–248 (TSE) serves as a coordination point for L-serine. ATP-binding positions include 279–281 (RRE) and Val-295. L-serine is bound at residue Glu-302. An ATP-binding site is contributed by 366-369 (ELVS). Thr-404 is an L-serine binding site.

This sequence belongs to the class-II aminoacyl-tRNA synthetase family. Type-1 seryl-tRNA synthetase subfamily. Homodimer. The tRNA molecule binds across the dimer.

Its subcellular location is the cytoplasm. The protein resides in the cytosol. The enzyme catalyses tRNA(Ser) + L-serine + ATP = L-seryl-tRNA(Ser) + AMP + diphosphate + H(+). Catalyzes the attachment of serine to tRNA(Ser) in a two-step reaction: serine is first activated by ATP to form Ser-AMP and then transferred to the acceptor end of tRNA(Ser). This chain is Serine--tRNA ligase, cytoplasmic (SES1), found in Candida albicans (strain SC5314 / ATCC MYA-2876) (Yeast).